The chain runs to 1049 residues: Cilia- and flagella-associated protein 337 (1049 aa).

Residues 81–116 (GTKEEYGELFDKVDVAQDGFINWDKLTSFILLELYE) form the EF-hand domain. WD repeat units lie at residues 138–177 (KHKDTIQKVIFLKNSSHYLTISKEGLLAIWGEHLKLQETF), 358–397 (NIAQGIHAFDYHSRLNLIATAGINNKVCLWNPYVVSKPVG), 401–440 (GHSASVIAVQFFVERKQLFSFSKDKVLRLWDIQHQLSIQR), 487–528 (SHEK…KQFT), 531–570 (HGNAEISTMALDANETRLLTGSTDGTVKIWDFNGYCHHTL), and 633–671 (QHHDDILCAAFLPPQTLVTGSYDGEIVLWNNSTENAHHV). Residues 691 to 712 (LLSAGRSQPSHPMADHSTTGVR) form a disordered region. Over residues 695–711 (GRSQPSHPMADHSTTGV) the composition is skewed to polar residues. WD repeat units follow at residues 719–766 (EGKN…LLAE), 769–809 (AHSG…LNSS), and 825–866 (PHED…VWIF).

The protein belongs to the CFAP337 family. In terms of assembly, associates with components of the nexin-dynein regulatory complex (N-DRC) and the CFAP184:CFAP263 complex.

It is found in the cell projection. It localises to the cilium. Functionally, associates with components of the nexin-dynein regulatory complex (N-DRC), a key regulator of ciliary/flagellar motility, and might act as an inner dynein arm (IDA) hub or linkage. The polypeptide is Cilia- and flagella-associated protein 337 (Homo sapiens (Human)).